The primary structure comprises 902 residues: 3'-5' exonuclease DinG (902 aa).

The Exonuclease domain occupies 8–161 (VVDLETTGNQ…DEDATTTAKL (154 aa)). Residues 241-496 (KNVTQSLNLT…KAVDKLEQQR (256 aa)) enclose the Helicase ATP-binding domain. Position 276–283 (276–283 (APLGSGKS)) interacts with ATP. Positions 448 to 451 (DEAH) match the DEAH box motif. The region spanning 714 to 883 (YIVEYITVTQ…HFKQRKGNIK (170 aa)) is the Helicase C-terminal domain.

This sequence belongs to the helicase family. DinG subfamily. Type 2 sub-subfamily.

Functionally, 3'-5' exonuclease. This Staphylococcus epidermidis (strain ATCC 35984 / DSM 28319 / BCRC 17069 / CCUG 31568 / BM 3577 / RP62A) protein is 3'-5' exonuclease DinG.